The following is a 165-amino-acid chain: SsrA-binding protein (165 aa).

This sequence belongs to the SmpB family.

The protein localises to the cytoplasm. Its function is as follows. Required for rescue of stalled ribosomes mediated by trans-translation. Binds to transfer-messenger RNA (tmRNA), required for stable association of tmRNA with ribosomes. tmRNA and SmpB together mimic tRNA shape, replacing the anticodon stem-loop with SmpB. tmRNA is encoded by the ssrA gene; the 2 termini fold to resemble tRNA(Ala) and it encodes a 'tag peptide', a short internal open reading frame. During trans-translation Ala-aminoacylated tmRNA acts like a tRNA, entering the A-site of stalled ribosomes, displacing the stalled mRNA. The ribosome then switches to translate the ORF on the tmRNA; the nascent peptide is terminated with the 'tag peptide' encoded by the tmRNA and targeted for degradation. The ribosome is freed to recommence translation, which seems to be the essential function of trans-translation. This chain is SsrA-binding protein, found in Parvibaculum lavamentivorans (strain DS-1 / DSM 13023 / NCIMB 13966).